Consider the following 388-residue polypeptide: Succinate--CoA ligase [ADP-forming] subunit beta (388 aa).

In terms of domain architecture, ATP-grasp spans 9 to 244 (KQLFAEYGLP…PSQDDAREAH (236 aa)). ATP contacts are provided by residues lysine 46, 53 to 55 (GRG), glutamate 99, threonine 102, and glutamate 107. Positions 199 and 213 each coordinate Mg(2+). Substrate is bound by residues asparagine 264 and 321 to 323 (GIV).

Belongs to the succinate/malate CoA ligase beta subunit family. As to quaternary structure, heterotetramer of two alpha and two beta subunits. The cofactor is Mg(2+).

The catalysed reaction is succinate + ATP + CoA = succinyl-CoA + ADP + phosphate. The enzyme catalyses GTP + succinate + CoA = succinyl-CoA + GDP + phosphate. Its pathway is carbohydrate metabolism; tricarboxylic acid cycle; succinate from succinyl-CoA (ligase route): step 1/1. Succinyl-CoA synthetase functions in the citric acid cycle (TCA), coupling the hydrolysis of succinyl-CoA to the synthesis of either ATP or GTP and thus represents the only step of substrate-level phosphorylation in the TCA. The beta subunit provides nucleotide specificity of the enzyme and binds the substrate succinate, while the binding sites for coenzyme A and phosphate are found in the alpha subunit. The chain is Succinate--CoA ligase [ADP-forming] subunit beta from Pseudomonas aeruginosa (strain LESB58).